The following is a 128-amino-acid chain: DELTA-urthionin-Uf1a (128 aa).

The N-terminal stretch at 1–24 is a signal peptide; it reads MEGKTVIVSLLLLSIVVGQIQVEA. 3 cysteine pairs are disulfide-bonded: Cys27–Cys64, Cys28–Cys56, and Cys40–Cys50. Positions 67–128 are cleaved as a propeptide — acidic domain; sequence LSIPEVTGEA…LCTKNSIETA (62 aa).

Belongs to the plant thionin (TC 1.C.44) family. As to expression, expressed in trichomes, that are stiff epidermal hairs located on the surface of petioles and leaves.

The protein resides in the secreted. In terms of biological role, plant defense protein that causes pain by probable disruption of cell membranes. Shows cytotoxic activity against the neuroblastoma cell line SH-SY5Y and slightly weaker activity against several non-neuronal cell lines. In vivo, intraplantar injection into mice causes several nocifensive responses, along with swelling and redness. In Urtica ferox (Tree nettle), this protein is DELTA-urthionin-Uf1a.